A 228-amino-acid polypeptide reads, in one-letter code: Putative adhesin RBE_1271 (228 aa).

The first 22 residues, 1 to 22 (MKKLLLIAATSATVLSSALSFA), serve as a signal peptide directing secretion.

In Rickettsia bellii (strain RML369-C), this protein is Putative adhesin RBE_1271.